Reading from the N-terminus, the 194-residue chain is 3-isopropylmalate dehydratase small subunit (194 aa).

This sequence belongs to the LeuD family. LeuD type 1 subfamily. In terms of assembly, heterodimer of LeuC and LeuD.

It catalyses the reaction (2R,3S)-3-isopropylmalate = (2S)-2-isopropylmalate. The protein operates within amino-acid biosynthesis; L-leucine biosynthesis; L-leucine from 3-methyl-2-oxobutanoate: step 2/4. In terms of biological role, catalyzes the isomerization between 2-isopropylmalate and 3-isopropylmalate, via the formation of 2-isopropylmaleate. The polypeptide is 3-isopropylmalate dehydratase small subunit (Bacillus cereus (strain ATCC 14579 / DSM 31 / CCUG 7414 / JCM 2152 / NBRC 15305 / NCIMB 9373 / NCTC 2599 / NRRL B-3711)).